Consider the following 337-residue polypeptide: GTPase Obg (337 aa).

One can recognise an Obg domain in the interval 1-159 (MKFVDSASIF…LMLNMELKLM (159 aa)). The 164-residue stretch at 160-323 (ADVGLVGFPN…LKDELWREVS (164 aa)) folds into the OBG-type G domain. GTP-binding positions include 166–173 (GFPNAGKS), 191–195 (FTTLV), 213–216 (DIPG), 280–283 (TKMD), and 304–306 (SAV). S173 and T193 together coordinate Mg(2+).

This sequence belongs to the TRAFAC class OBG-HflX-like GTPase superfamily. OBG GTPase family. Monomer. It depends on Mg(2+) as a cofactor.

It localises to the cytoplasm. Functionally, an essential GTPase which binds GTP, GDP and possibly (p)ppGpp with moderate affinity, with high nucleotide exchange rates and a fairly low GTP hydrolysis rate. Plays a role in control of the cell cycle, stress response, ribosome biogenesis and in those bacteria that undergo differentiation, in morphogenesis control. The protein is GTPase Obg of Pelodictyon phaeoclathratiforme (strain DSM 5477 / BU-1).